The primary structure comprises 400 residues: Leucine-rich repeat flightless-interacting protein 2 (400 aa).

2 disordered regions span residues 1 to 28 and 53 to 119; these read MGTP…SNID and LERQ…LSEV. A Phosphoserine modification is found at Ser-18. The stretch at 29–71 forms a coiled coil; that stretch reads REAEARLAAKRAARAEARDIRMRELERQQKELDEKSDKQYAEN. The segment covering 53–68 has biased composition (basic and acidic residues); it reads LERQQKELDEKSDKQY. Over residues 73-102 the composition is skewed to polar residues; it reads TRPSSRNSASATTPLSGNSSRRVSGDTSSL. Phosphoserine occurs at positions 77, 80, 88, 92, and 96. The residue at position 99 (Thr-99) is a Phosphothreonine. Residues Ser-100 and Ser-101 each carry the phosphoserine modification. 2 coiled-coil regions span residues 106–202 and 245–393; these read DTSL…LIEK and LDVR…KANR.

The protein belongs to the LRRFIP family. In terms of assembly, interacts with DVL3 and FLII. Weakly interacts with MYD88 in resting cells. Following LPS-stimulation, the interaction with MYD88 is rapidly enhanced; the complex gradually dissociates to basal levels after 6 hours of stimulation. Interaction with MYD88 is regulated by LPS-induced phosphorylation. In the presence of LPS, competes with FLII for MYD88-binding.

Functionally, may function as activator of the canonical Wnt signaling pathway, in association with DVL3, upstream of CTNNB1/beta-catenin. Positively regulates Toll-like receptor (TLR) signaling in response to agonist probably by competing with the negative FLII regulator for MYD88-binding. The protein is Leucine-rich repeat flightless-interacting protein 2 (LRRFIP2) of Bos taurus (Bovine).